Consider the following 633-residue polypeptide: MYCNICKRNDFKNEHGLNIHKAKVHGIRKQHESAHPPRERHTERTATKRSDETKTASRPTASHEGKTHTTNPRGQVHPHTSNDVVRQSAMIVQMEAIQKCPLLGNHFKGPADVHPQRTKTPSGARKPETPKKPHSATKDDHRTKTPGTPHSADTRTPSSTGTDFGGVRPKTPRGARKPDTPKKPHSATKDDHRTKTPGTPHSADTRTPSSTDPFICPICDGKSFKYEGWFIKHMENKHPGCAFGVVAKGREDDKSDQEKRDSWKRREGSVDDRPSSVAPNFADSFNIKTFEKWVTVAEASIIRQKTDTDETIDCMNRFIKMLESTMNGISHFPLKTFKSGSYYDRTKIDYNDEFDFMFFPDMKMEAVFTNCPPGYCKIRKGVTNSKDLDPYLNKDGFLVPGLFKQAMFDLFEKSLSDGTFREGRRTTRQTSKPGSPAYTILYNLGIHGKRPIDVDLVPAIRIECWPKPAKEIKPDWVKKETTERATRCFHAVMKTYPENWPDGDLLWRISFTHAEKELILHANEKEKGCRKDIFRLLKKIKEVMKSRNSNDIDKFCSYHLKMFMLKFFDKEKYFRNEMKVDLLKKAIKKLGESVEHGNIPNYFIPEDNVIVNVLEKERTLIAKELRALLEGNW.

Disordered stretches follow at residues 23-80, 107-214, and 250-276; these read KVHG…HPHT, FKGP…TDPF, and REDDKSDQEKRDSWKRREGSVDDRPSS. The segment covering 29-67 has biased composition (basic and acidic residues); sequence KQHESAHPPRERHTERTATKRSDETKTASRPTASHEGKT. Residues 68 to 80 show a composition bias toward polar residues; that stretch reads HTTNPRGQVHPHT. Basic and acidic residues-rich tracts occupy residues 125 to 143, 176 to 194, and 250 to 274; these read RKPETPKKPHSATKDDHRT, RKPDTPKKPHSATKDDHRT, and REDDKSDQEKRDSWKRREGSVDDRP. Positions 353, 355, and 455 each coordinate Mg(2+).

The protein belongs to the mab-21 family. It depends on Mg(2+) as a cofactor. Requires Mn(2+) as cofactor.

It carries out the reaction UTP + ATP = 2',3'-cUAMP + 2 diphosphate. Its function is as follows. Nucleotidyltransferase that catalyzes the formation of cyclic UMP-AMP (2',3'-cUAMP) from ATP and UTP and plays a key role in innate immunity. Acts as a key sensor of double-stranded DNA (dsDNA), the presence of dsDNA in the cytoplasm being a danger signal that triggers the immune responses. Directly binds dsDNA, activating the nucleotidyltransferase activity, leading to synthesis of 2',3'-cUAMP, a second messenger that binds to and activates Sting, thereby triggering the immune response via activation of the NF-kappa-B transcription factor. This is Cyclic GMP-AMP synthase-like receptor 1 from Crassostrea virginica (Eastern oyster).